We begin with the raw amino-acid sequence, 343 residues long: MEQEDFNIREHQLTSRERDFENALRPLSFEDFSGQDKVVENLRIFVKAARLRGEALDHVLLHGPPGLGKTTLSNIIANELGVGFKVTSGPVLDKPGDLAGVLTSLEPNDVLFIDEIHRLSPVVEEYLYSAMEDYRIDIMIDKGPSARSIQIDLNPFTLVGATTRSGLLTAPLRARFGINLHLEYYDDDILSNIIRRSASILDVPCSVRAASEIASRSRGTPRIANALLRRVRDFAQVKGSGSIDTEIAQFALEALNIDKYGLDEIDNKILCTIIDKFKGGPVGLTTIATALGEDAGTIEEVYEPFLIKEGFMKRTPRGREVTELAYKHLGRSLYSSQKTLFND.

Residues 1–185 (MEQEDFNIRE…FGINLHLEYY (185 aa)) are large ATPase domain (RuvB-L). ATP is bound by residues L24, R25, G66, K69, T70, T71, 132 to 134 (EDY), R175, Y185, and R222. T70 contacts Mg(2+). The segment at 186–256 (DDDILSNIIR…IAQFALEALN (71 aa)) is small ATPAse domain (RuvB-S). The head domain (RuvB-H) stretch occupies residues 259–343 (KYGLDEIDNK…YSSQKTLFND (85 aa)). The DNA site is built by R314 and R319.

The protein belongs to the RuvB family. Homohexamer. Forms an RuvA(8)-RuvB(12)-Holliday junction (HJ) complex. HJ DNA is sandwiched between 2 RuvA tetramers; dsDNA enters through RuvA and exits via RuvB. An RuvB hexamer assembles on each DNA strand where it exits the tetramer. Each RuvB hexamer is contacted by two RuvA subunits (via domain III) on 2 adjacent RuvB subunits; this complex drives branch migration. In the full resolvosome a probable DNA-RuvA(4)-RuvB(12)-RuvC(2) complex forms which resolves the HJ.

It localises to the cytoplasm. It catalyses the reaction ATP + H2O = ADP + phosphate + H(+). The RuvA-RuvB-RuvC complex processes Holliday junction (HJ) DNA during genetic recombination and DNA repair, while the RuvA-RuvB complex plays an important role in the rescue of blocked DNA replication forks via replication fork reversal (RFR). RuvA specifically binds to HJ cruciform DNA, conferring on it an open structure. The RuvB hexamer acts as an ATP-dependent pump, pulling dsDNA into and through the RuvAB complex. RuvB forms 2 homohexamers on either side of HJ DNA bound by 1 or 2 RuvA tetramers; 4 subunits per hexamer contact DNA at a time. Coordinated motions by a converter formed by DNA-disengaged RuvB subunits stimulates ATP hydrolysis and nucleotide exchange. Immobilization of the converter enables RuvB to convert the ATP-contained energy into a lever motion, pulling 2 nucleotides of DNA out of the RuvA tetramer per ATP hydrolyzed, thus driving DNA branch migration. The RuvB motors rotate together with the DNA substrate, which together with the progressing nucleotide cycle form the mechanistic basis for DNA recombination by continuous HJ branch migration. Branch migration allows RuvC to scan DNA until it finds its consensus sequence, where it cleaves and resolves cruciform DNA. This chain is Holliday junction branch migration complex subunit RuvB, found in Bacteroides thetaiotaomicron (strain ATCC 29148 / DSM 2079 / JCM 5827 / CCUG 10774 / NCTC 10582 / VPI-5482 / E50).